The sequence spans 314 residues: Putative lipoprotein LppW (314 aa).

Residues 1 to 22 form the signal peptide; sequence MRARPLTLLTALAAVTLVVVAG. A lipid anchor (N-palmitoyl cysteine) is attached at cysteine 23. Cysteine 23 carries S-diacylglycerol cysteine lipidation.

The protein localises to the cell membrane. In Mycobacterium bovis (strain ATCC BAA-935 / AF2122/97), this protein is Putative lipoprotein LppW (lppW).